We begin with the raw amino-acid sequence, 992 residues long: Probable RNA-dependent RNA polymerase 3 (992 aa).

The interval Pro88–Asp113 is disordered.

The protein belongs to the RdRP family.

It carries out the reaction RNA(n) + a ribonucleoside 5'-triphosphate = RNA(n+1) + diphosphate. Its function is as follows. Probably involved in the RNA silencing pathway and required for the generation of small interfering RNAs (siRNAs). This Arabidopsis thaliana (Mouse-ear cress) protein is Probable RNA-dependent RNA polymerase 3 (RDR3).